The primary structure comprises 466 residues: Phytase A (466 aa).

The first 19 residues, 1–19 (MGFLAIVLSVALLFRSTSG), serve as a signal peptide directing secretion. Cys31 and Cys40 are disulfide-bonded. 1D-myo-inositol hexakisphosphate-binding residues include Tyr51, Arg81, His82, Arg85, and Thr88. 4 disulfide bridges follow: Cys71–Cys414, Cys215–Cys465, Cys264–Cys282, and Cys436–Cys444. The active-site Nucleophile is His82. Asn120 is a glycosylation site (N-linked (GlcNAc...) asparagine). Arg165 is a binding site for 1D-myo-inositol hexakisphosphate. Residues Asn207 and Asn230 are each glycosylated (N-linked (GlcNAc...) asparagine). 1D-myo-inositol hexakisphosphate is bound at residue Lys301. Asn339 and Asn352 each carry an N-linked (GlcNAc...) asparagine glycan. 1D-myo-inositol hexakisphosphate-binding residues include His361 and Asp362. A glycan (N-linked (GlcNAc...) asparagine) is linked at Asn376.

The protein belongs to the histidine acid phosphatase family. As to quaternary structure, monomer.

The protein localises to the secreted. It catalyses the reaction 1D-myo-inositol hexakisphosphate + H2O = 1D-myo-inositol 1,2,4,5,6-pentakisphosphate + phosphate. The enzyme catalyses 1D-myo-inositol 1,2,4,5,6-pentakisphosphate + H2O = 1D-myo-inositol 1,2,5,6-tetrakisphosphate + phosphate. It carries out the reaction 1D-myo-inositol 1,2,5,6-tetrakisphosphate + H2O = 1D-myo-inositol 1,2,6-trisphosphate + phosphate. The catalysed reaction is 1D-myo-inositol 1,2,6-trisphosphate + H2O = 1D-myo-inositol 1,2-bisphosphate + phosphate. It catalyses the reaction 1D-myo-inositol 1,2-bisphosphate + H2O = 1D-myo-inositol 2-phosphate + phosphate. Its function is as follows. Catalyzes the phosphate monoester hydrolysis of phytic acid (myo-inositol hexakisphosphate), which results in the stepwise formation of myo-inositol pentakis-, tetrakis-, tris-, bis-, and monophosphates, as well as the liberation of inorganic phosphate. Myo-inositol 2-monophosphate is the end product. Has a broad substrate specificity and is also able to dephosphorylate other classic acid phosphatase substrates such as p-nitrophenyl phosphate, phenyl phosphate, fructose 1,6-bisphosphate, glucose 6-phosphate, 3-phosphoglycerate, as well as ADP and ATP. This chain is Phytase A, found in Aspergillus terreus.